The sequence spans 267 residues: Cilia- and flagella-associated protein 300 (267 aa).

This sequence belongs to the CFAP300 family. In terms of assembly, interacts with DNAAF2. Expressed in nasal epithelial cells.

The protein resides in the cytoplasm. Its subcellular location is the cytoskeleton. The protein localises to the cilium axoneme. In terms of biological role, cilium- and flagellum-specific protein that plays a role in axonemal structure organization and motility. May play a role in outer and inner dynein arm assembly. The polypeptide is Cilia- and flagella-associated protein 300 (Homo sapiens (Human)).